Reading from the N-terminus, the 210-residue chain is FMN-dependent NADH:quinone oxidoreductase 8 (210 aa).

FMN contacts are provided by residues Ser10 and 16-18 (SIS).

The protein belongs to the azoreductase type 1 family. As to quaternary structure, homodimer. FMN serves as cofactor.

It catalyses the reaction 2 a quinone + NADH + H(+) = 2 a 1,4-benzosemiquinone + NAD(+). The enzyme catalyses N,N-dimethyl-1,4-phenylenediamine + anthranilate + 2 NAD(+) = 2-(4-dimethylaminophenyl)diazenylbenzoate + 2 NADH + 2 H(+). Quinone reductase that provides resistance to thiol-specific stress caused by electrophilic quinones. In terms of biological role, also exhibits azoreductase activity. Catalyzes the reductive cleavage of the azo bond in aromatic azo compounds to the corresponding amines. This chain is FMN-dependent NADH:quinone oxidoreductase 8, found in Burkholderia lata (strain ATCC 17760 / DSM 23089 / LMG 22485 / NCIMB 9086 / R18194 / 383).